Consider the following 415-residue polypeptide: Plant UBX domain-containing protein 16 (415 aa).

The UBA domain maps to 19–69 (QLDEEIVLFRQDQLISSFLEIAVDQTAETARILLQTTDWNIDQAVNLFLTN). Positions 333–413 (DRSVVCSLCV…GLANSLISVT (81 aa)) constitute a UBX domain.

This Arabidopsis thaliana (Mouse-ear cress) protein is Plant UBX domain-containing protein 16.